An 859-amino-acid polypeptide reads, in one-letter code: Leucine--tRNA ligase (859 aa).

Residues 42 to 52 carry the 'HIGH' region motif; that stretch reads PYPSGRLHMGH. Residues 618–622 carry the 'KMSKS' region motif; it reads KMSKS. Lys-621 contributes to the ATP binding site.

Belongs to the class-I aminoacyl-tRNA synthetase family.

It localises to the cytoplasm. It catalyses the reaction tRNA(Leu) + L-leucine + ATP = L-leucyl-tRNA(Leu) + AMP + diphosphate. In Shewanella woodyi (strain ATCC 51908 / MS32), this protein is Leucine--tRNA ligase.